The chain runs to 136 residues: Histone H2B (136 aa).

Residues 1-10 show a composition bias toward basic and acidic residues; sequence MPPKAADKKP. Positions 1 to 44 are disordered; sequence MPPKAADKKPAAKAPVASKAPEKKDAGKKTASTGEKKKRTKARR. Lys8 and Lys9 each carry N6-acetyllysine; alternate. Glycyl lysine isopeptide (Lys-Gly) (interchain with G-Cter in SUMO); alternate cross-links involve residues Lys8 and Lys9. Lys13 is subject to N6-acetyllysine. Lys23 carries the post-translational modification N6-acetyllysine; alternate. Lys23 participates in a covalent cross-link: Glycyl lysine isopeptide (Lys-Gly) (interchain with G-Cter in SUMO); alternate. Residue Lys24 forms a Glycyl lysine isopeptide (Lys-Gly) (interchain with G-Cter in SUMO) linkage. A Glycyl lysine isopeptide (Lys-Gly) (interchain with G-Cter in ubiquitin) cross-link involves residue Lys130.

Belongs to the histone H2B family. As to quaternary structure, the nucleosome is a histone octamer containing two molecules each of H2A, H2B, H3 and H4 assembled in one H3-H4 heterotetramer and two H2A-H2B heterodimers. The octamer wraps approximately 147 bp of DNA. In terms of processing, monoubiquitinated to form H2BK123ub1. H2BK123ub1 gives a specific tag for epigenetic transcriptional activation and is also prerequisite for H3K4me and H3K79me formation. H2BK123ub1 also modulates the formation of double-strand breaks during meiosis and is a prerequisite for DNA-damage checkpoint activation. Post-translationally, acetylated by GCN5 to form H2BK11ac and H2BK16ac. H2BK16ac can also be formed by ESA1. Acetylation of N-terminal lysines and particularly formation of H2BK11acK16ac has a positive effect on transcription. Sumoylation to form H2BK6su or H2BK7su, and probably also H2BK16su or H2BK17su, occurs preferentially near the telomeres and represses gene transcription.

The protein resides in the nucleus. It is found in the chromosome. Core component of nucleosome. Nucleosomes wrap and compact DNA into chromatin, limiting DNA accessibility to the cellular machineries which require DNA as a template. Histones thereby play a central role in transcription regulation, DNA repair, DNA replication and chromosomal stability. DNA accessibility is regulated via a complex set of post-translational modifications of histones, also called histone code, and nucleosome remodeling. The polypeptide is Histone H2B (hh2b) (Rosellinia necatrix (White root-rot fungus)).